We begin with the raw amino-acid sequence, 568 residues long: CRISPR-associated exonuclease Cas4/endonuclease Cas1 fusion (568 aa).

The interval 1 to 209 (MSVVVTRYRG…KCSLAPVCLP (209 aa)) is CRISPR-associated exonuclease Cas4. Cys43 provides a ligand contact to [4Fe-4S] cluster. Residues Asp95 and Glu108 each coordinate Mn(2+). Positions 198, 201, and 207 each coordinate [4Fe-4S] cluster. Residues 232 to 568 (VLHVATPGTR…PGLFATFRLR (337 aa)) are CRISPR-associated endonuclease Cas1. Mn(2+) is bound by residues Glu390, His459, and Glu474.

This sequence in the N-terminal section; belongs to the CRISPR-associated exonuclease Cas4 family. In the C-terminal section; belongs to the CRISPR-associated endonuclease Cas1 family. In terms of assembly, homodimer, forms a heterotetramer with a Cas2 homodimer. It depends on [4Fe-4S] cluster as a cofactor. The cofactor is Mg(2+). Requires Mn(2+) as cofactor.

The enzyme catalyses exonucleolytic cleavage in the 5'- to 3'-direction to yield nucleoside 3'-phosphates.. Functionally, CRISPR (clustered regularly interspaced short palindromic repeat), is an adaptive immune system that provides protection against mobile genetic elements (viruses, transposable elements and conjugative plasmids). CRISPR clusters contain spacers, sequences complementary to antecedent mobile elements, and target invading nucleic acids. CRISPR clusters are transcribed and processed into CRISPR RNA (crRNA). The Cas4 region acts as a ssDNA exonuclease, while the Cas1 region acts as a dsDNA endonuclease. Involved in the integration of spacer DNA into the CRISPR cassette. This is CRISPR-associated exonuclease Cas4/endonuclease Cas1 fusion (cas4-cas1) from Myxococcus xanthus (strain DK1622).